The primary structure comprises 256 residues: Imidazole glycerol phosphate synthase subunit HisF (256 aa).

Residues aspartate 11 and aspartate 130 contribute to the active site.

The protein belongs to the HisA/HisF family. As to quaternary structure, heterodimer of HisH and HisF.

It localises to the cytoplasm. The catalysed reaction is 5-[(5-phospho-1-deoxy-D-ribulos-1-ylimino)methylamino]-1-(5-phospho-beta-D-ribosyl)imidazole-4-carboxamide + L-glutamine = D-erythro-1-(imidazol-4-yl)glycerol 3-phosphate + 5-amino-1-(5-phospho-beta-D-ribosyl)imidazole-4-carboxamide + L-glutamate + H(+). Its pathway is amino-acid biosynthesis; L-histidine biosynthesis; L-histidine from 5-phospho-alpha-D-ribose 1-diphosphate: step 5/9. IGPS catalyzes the conversion of PRFAR and glutamine to IGP, AICAR and glutamate. The HisF subunit catalyzes the cyclization activity that produces IGP and AICAR from PRFAR using the ammonia provided by the HisH subunit. This Prochlorococcus marinus (strain MIT 9215) protein is Imidazole glycerol phosphate synthase subunit HisF.